The primary structure comprises 543 residues: Terpineol synthase, chloroplastic (543 aa).

Residues 1-22 (MNTEPSPNHYSAISSSDQNLTR) are disordered. Arg-263, Asp-300, Asp-304, Arg-435, and Asn-438 together coordinate (2E)-geranyl diphosphate. Mg(2+) is bound by residues Asp-300 and Asp-304. Positions 300–304 (DDVYD) match the DDXXD motif motif. Asn-438, Thr-442, and Glu-446 together coordinate Mg(2+).

The protein belongs to the terpene synthase family. Tpsb subfamily. Monomer. The cofactor is Mg(2+). It depends on Mn(2+) as a cofactor. As to expression, confined to flowers.

The protein localises to the plastid. It is found in the chloroplast. The catalysed reaction is (2E)-geranyl diphosphate + H2O = (S)-alpha-terpineol + diphosphate. It carries out the reaction (2E)-geranyl diphosphate = sabinene + diphosphate. The enzyme catalyses (2E)-geranyl diphosphate = beta-myrcene + diphosphate. It catalyses the reaction (2E)-geranyl diphosphate = limonene + diphosphate. The catalysed reaction is (2E)-geranyl diphosphate + H2O = 1,8-cineole + diphosphate. It functions in the pathway secondary metabolite biosynthesis; terpenoid biosynthesis. Its function is as follows. Monoterpene synthase (TPS) involved in the biosynthesis of monoterpene natural products of the 'cineole cassette', volatile compounds present in floral scent. Catalyzes the conversion of (2E)-geranyl diphosphate (GPP) into alpha-terpineol and, as minor products, sabinene, beta-myrcene, limonene and 1,8-cineole. In Nicotiana alata (Winged tobacco), this protein is Terpineol synthase, chloroplastic.